The chain runs to 279 residues: Urease accessory protein UreD (279 aa).

Belongs to the UreD family. As to quaternary structure, ureD, UreF and UreG form a complex that acts as a GTP-hydrolysis-dependent molecular chaperone, activating the urease apoprotein by helping to assemble the nickel containing metallocenter of UreC. The UreE protein probably delivers the nickel.

The protein resides in the cytoplasm. Required for maturation of urease via the functional incorporation of the urease nickel metallocenter. In Nostoc punctiforme (strain ATCC 29133 / PCC 73102), this protein is Urease accessory protein UreD.